The primary structure comprises 168 residues: Plastocyanin, chloroplastic (168 aa).

A chloroplast-targeting transit peptide spans 1–70; the sequence is MASVAAAAVS…SSLLLVASAN (70 aa). The Plastocyanin-like domain occupies 71–168; sequence AATVKMGGDD…AGMKGVVTVS (98 aa). H108, C153, H156, and M161 together coordinate Cu cation.

Belongs to the plastocyanin family. Cu(2+) is required as a cofactor.

The protein resides in the plastid. It localises to the chloroplast thylakoid membrane. Participates in electron transfer between P700 and the cytochrome b6-f complex in photosystem I. The polypeptide is Plastocyanin, chloroplastic (PETE) (Physcomitrium patens (Spreading-leaved earth moss)).